The primary structure comprises 585 residues: Proline-rich protein 14 (585 aa).

Residue M1 is modified to N-acetylmethionine. The segment at M1–P135 is sufficient for heterochromatin association in interphase and chromatin association in anaphase. 3 disordered regions span residues A23–K46, T73–Q150, and I189–L241. A required for the interaction with GRB2 and sufficient to promote the phosphorylation of AKT and cell proliferation region spans residues P85–P378. A compositionally biased stretch (basic residues) spans R119 to R132. Residues G136–G365 are required for nuclear lamina association. The segment covering P193 to Q205 has biased composition (pro residues). S277 bears the Phosphoserine mark. 2 disordered regions span residues E290–R445 and D525–G557. Positions L337–R356 are enriched in pro residues. Low complexity predominate over residues S393–S409. The interval R518–S535 is required for nuclear localization.

As to quaternary structure, interacts (via proline-rich region) with GRB2 (via SH3 domain 2). Interacts (via N-terminus) with CBX5.

It localises to the chromosome. The protein resides in the nucleus. It is found in the nucleus lamina. The protein localises to the nucleoplasm. In terms of biological role, functions in tethering peripheral heterochromatin to the nuclear lamina during interphase, possibly through the interaction with heterochromatin protein CBX5/HP1 alpha. Might play a role in reattaching heterochromatin to the nuclear lamina at mitotic exit. Promotes myoblast differentiation during skeletal myogenesis, possibly by stimulating transcription factor MyoD activity via binding to CBX5/HP1 alpha. Involved in the positive regulation of the PI3K-Akt-mTOR signaling pathway and in promoting cell proliferation, possibly via binding to GRB2. The sequence is that of Proline-rich protein 14 (PRR14) from Homo sapiens (Human).